The following is a 194-amino-acid chain: CASP-like protein 1B1 (194 aa).

Over 1 to 24 the chain is Cytoplasmic; it reads MASENGDKLELAFSAVPDPKPKKD. Residues 25-45 form a helical membrane-spanning segment; sequence WVILSLRVVAFFATASATLVM. Topologically, residues 46–77 are extracellular; it reads AFNKQTKGMVVATIGTNPVTITLTAMFQHTPA. The chain crosses the membrane as a helical span at residues 78 to 98; that stretch reads FIFFVIVNAIASFYNLLVIGV. Over 99–111 the chain is Cytoplasmic; it reads EILGPQYDYKGLR. Residues 112 to 132 form a helical membrane-spanning segment; it reads LGLIAILDVMTMALAATGDGA. The Extracellular portion of the chain corresponds to 133-164; it reads ATFMAELGRNGNSHARWDKICDKFEAYCNRGG. Residues 165 to 185 traverse the membrane as a helical segment; that stretch reads VALVASFVGLILLLVVTVMSI. The Cytoplasmic portion of the chain corresponds to 186–194; that stretch reads TKLLKLNRI.

This sequence belongs to the Casparian strip membrane proteins (CASP) family. In terms of assembly, homodimer and heterodimers.

It is found in the cell membrane. This is CASP-like protein 1B1 from Glycine max (Soybean).